We begin with the raw amino-acid sequence, 106 residues long: EspC protein homolog (106 aa).

It belongs to the EspC family.

This is EspC protein homolog from Mycobacterium leprae (strain TN).